The primary structure comprises 413 residues: Putative tRNA pseudouridine synthase C16C4.06c (413 aa).

Catalysis depends on D96, which acts as the Nucleophile. Y154 is a substrate binding site.

The protein belongs to the tRNA pseudouridine synthase TruA family.

It is found in the cytoplasm. The protein localises to the nucleus. It carries out the reaction a uridine in tRNA = a pseudouridine in tRNA. The polypeptide is Putative tRNA pseudouridine synthase C16C4.06c (Schizosaccharomyces pombe (strain 972 / ATCC 24843) (Fission yeast)).